Reading from the N-terminus, the 247-residue chain is LHFPL tetraspan subfamily member 4 protein (247 aa).

A run of 4 helical transmembrane segments spans residues 22–42 (IGVL…VVFI), 97–117 (FFVL…ALFF), 127–147 (ICAW…MIFP), and 178–198 (ILAI…FVLG).

The protein belongs to the LHFP family. Interacts with GABA(A) receptor subunits. Interacts with GABRB3. Interacts with GABRA2. Interacts with GABRG2. Identified in a complex of 720 kDa composed of LHFPL4, NLGN2, GABRA1, GABRB2, GABRG2 and GABRB3. Interacts with GABRA1. Interacts with NLGN2; leading to mutual regulation of protein level and synaptic clustering.

It is found in the cell projection. It localises to the dendrite. The protein resides in the postsynaptic cell membrane. Functionally, plays a role in the regulation of inhibitory synapse formation and function by being involved in maintening gamma-aminobutyric acid receptors (GABAARs) clustering and their associated scaffold proteins at inhibitory synaptic sites. Acts in concert with NLGN2 to recruit or stabilize GABAARs. This Bos taurus (Bovine) protein is LHFPL tetraspan subfamily member 4 protein.